The primary structure comprises 297 residues: Ribosomal RNA small subunit methyltransferase H (297 aa).

Residues glycine 36–histidine 38, aspartate 56, leucine 90, aspartate 104, and histidine 111 contribute to the S-adenosyl-L-methionine site.

This sequence belongs to the methyltransferase superfamily. RsmH family.

It is found in the cytoplasm. The catalysed reaction is cytidine(1402) in 16S rRNA + S-adenosyl-L-methionine = N(4)-methylcytidine(1402) in 16S rRNA + S-adenosyl-L-homocysteine + H(+). Functionally, specifically methylates the N4 position of cytidine in position 1402 (C1402) of 16S rRNA. This Dictyoglomus thermophilum (strain ATCC 35947 / DSM 3960 / H-6-12) protein is Ribosomal RNA small subunit methyltransferase H.